A 201-amino-acid polypeptide reads, in one-letter code: Recombination protein RecR (201 aa).

The C4-type zinc-finger motif lies at 60–75 (CSTCGNVDTADPCMIC). Positions 83–178 (GTIIVVEDVS…KVTRLAHGVP (96 aa)) constitute a Toprim domain.

Belongs to the RecR family.

May play a role in DNA repair. It seems to be involved in an RecBC-independent recombinational process of DNA repair. It may act with RecF and RecO. In Mesorhizobium japonicum (strain LMG 29417 / CECT 9101 / MAFF 303099) (Mesorhizobium loti (strain MAFF 303099)), this protein is Recombination protein RecR.